The following is a 224-amino-acid chain: LexA repressor (224 aa).

The segment at residues 31–51 is a DNA-binding region (H-T-H motif); it reads RAEIATELGFRSANAAEEHLQ. Catalysis depends on for autocatalytic cleavage activity residues Ser-142 and Lys-179.

Belongs to the peptidase S24 family. As to quaternary structure, homodimer.

The catalysed reaction is Hydrolysis of Ala-|-Gly bond in repressor LexA.. Its function is as follows. Represses a number of genes involved in the response to DNA damage (SOS response), including recA and lexA. In the presence of single-stranded DNA, RecA interacts with LexA causing an autocatalytic cleavage which disrupts the DNA-binding part of LexA, leading to derepression of the SOS regulon and eventually DNA repair. In Albidiferax ferrireducens (strain ATCC BAA-621 / DSM 15236 / T118) (Rhodoferax ferrireducens), this protein is LexA repressor.